The primary structure comprises 158 residues: MIELKSGLLVSKIRNGTVIDHIPAGRALAVLKILGIKGIEGYRIALVMNAESSKMGRKDILKIEDREIEEKEAELITLIAPEATINIIKDYEVVGKRKQEIPQEVVGLLRCTNPSCITNNDVEAITRFRTLKRRPLQLACEYCETRLTEDEVVRQILG.

Positions 111, 116, 140, and 143 each coordinate Zn(2+).

It belongs to the PyrI family. Contains catalytic and regulatory chains. It depends on Zn(2+) as a cofactor.

Functionally, involved in allosteric regulation of aspartate carbamoyltransferase. This Metallosphaera sedula (strain ATCC 51363 / DSM 5348 / JCM 9185 / NBRC 15509 / TH2) protein is Aspartate carbamoyltransferase regulatory chain.